Here is a 149-residue protein sequence, read N- to C-terminus: Large ribosomal subunit protein eL19 (149 aa).

The interval 45-94 (VADGTIDAEDTQGNSRGRARERDAKESYGHKKGAGSRKGKAGARQNEKRE) is disordered. Residues 62-73 (RARERDAKESYG) are compositionally biased toward basic and acidic residues. Basic residues predominate over residues 74–85 (HKKGAGSRKGKA).

The protein belongs to the eukaryotic ribosomal protein eL19 family. Part of the 50S ribosomal subunit.

Functionally, binds to the 23S rRNA. The protein is Large ribosomal subunit protein eL19 of Halobacterium salinarum (strain ATCC 700922 / JCM 11081 / NRC-1) (Halobacterium halobium).